Reading from the N-terminus, the 398-residue chain is Calcium-binding and coiled-coil domain-containing protein 2 (398 aa).

The CLIR signature appears at 133-136; sequence ILVV. A coiled-coil region spans residues 137 to 301; it reads TTQGEVEEIE…RENSRLLSYM (165 aa). The short motif at 203-206 is the LIR-like element; it reads DYWE. The interval 314-341 is disordered; the sequence is TSDEGGAGQNPGLVYGNPYSGIQESSSP. Residues 323–333 form an interaction with LGALS8 region; that stretch reads NPGLVYGNPYS. An interaction with MYO6 region spans residues 347 to 398; the sequence is KKCPICKADDICDHTLEQQQMQALCLNCPICDKIFPATEKQIFEDHVFCHSL. A UBZ1-type zinc finger spans residues 371-396; the sequence is CLNCPICDKIFPATEKQIFEDHVFCH. 4 residues coordinate Zn(2+): Cys-374, Cys-377, His-392, and His-396. Ser-397 is modified (phosphoserine).

This sequence belongs to the CALCOCO family. In terms of assembly, dimer. Part of a complex consisting of CALCOCO2, TAX1BP1 and MYO6. Interacts with MYO6. Interacts with GEMIN4. Interacts with ATG8 family members MAP1LC3A, MAP1LC3B, GABARAP, GABARAPL1 and GABARAPL2. Interacts with ATG8 family member MAP1LC3C. Interacts with LGALS8. Interacts with TOM1; the interaction is indirect and is mediated by MYO6, which acts as a bridge between TOM1 and CALCOCO2. Interacts with AZI2.

The protein localises to the cytoplasm. The protein resides in the perinuclear region. It is found in the cytoskeleton. It localises to the cytoplasmic vesicle. Its subcellular location is the autophagosome membrane. Xenophagy-specific receptor required for autophagy-mediated intracellular bacteria degradation. Acts as an effector protein of galectin-sensed membrane damage that restricts the proliferation of infecting pathogens upon entry into the cytosol by targeting LGALS8-associated bacteria for autophagy. Initially orchestrates bacteria targeting to autophagosomes and subsequently ensures pathogen degradation by regulating pathogen-containing autophagosome maturation. Bacteria targeting to autophagosomes relies on its interaction with MAP1LC3A, MAP1LC3B and/or GABARAPL2, whereas regulation of pathogen-containing autophagosome maturation requires the interaction with MAP3LC3C. May play a role in ruffle formation and actin cytoskeleton organization and seems to negatively regulate constitutive secretion. The protein is Calcium-binding and coiled-coil domain-containing protein 2 of Macaca fascicularis (Crab-eating macaque).